The following is a 126-amino-acid chain: UPF0235 protein C15orf40 homolog (126 aa).

The tract at residues 1–32 is disordered; the sequence is MPKKAGATSKGKNQTKEPETAPPAAGPVATDP. Phosphoserine is present on Ser-89.

Belongs to the UPF0235 family.

This is UPF0235 protein C15orf40 homolog from Mus musculus (Mouse).